The primary structure comprises 348 residues: tRNA N6-adenosine threonylcarbamoyltransferase (348 aa).

The Fe cation site is built by His116 and His120. Substrate is bound by residues 138–142, Asp171, Gly184, Asp188, and Asn277; that span reads QVSGG. Asp309 is a binding site for Fe cation.

Belongs to the KAE1 / TsaD family. Requires Fe(2+) as cofactor.

The protein resides in the cytoplasm. It catalyses the reaction L-threonylcarbamoyladenylate + adenosine(37) in tRNA = N(6)-L-threonylcarbamoyladenosine(37) in tRNA + AMP + H(+). Its function is as follows. Required for the formation of a threonylcarbamoyl group on adenosine at position 37 (t(6)A37) in tRNAs that read codons beginning with adenine. Is involved in the transfer of the threonylcarbamoyl moiety of threonylcarbamoyl-AMP (TC-AMP) to the N6 group of A37, together with TsaE and TsaB. TsaD likely plays a direct catalytic role in this reaction. This chain is tRNA N6-adenosine threonylcarbamoyltransferase, found in Lactobacillus johnsonii (strain CNCM I-12250 / La1 / NCC 533).